Here is a 242-residue protein sequence, read N- to C-terminus: Probable transcriptional regulatory protein BamMC406_2210 (242 aa).

It belongs to the TACO1 family.

It localises to the cytoplasm. This Burkholderia ambifaria (strain MC40-6) protein is Probable transcriptional regulatory protein BamMC406_2210.